The chain runs to 418 residues: Serine hydroxymethyltransferase (418 aa).

Residues leucine 121 and 125–127 contribute to the (6S)-5,6,7,8-tetrahydrofolate site; that span reads GHL. At lysine 230 the chain carries N6-(pyridoxal phosphate)lysine. 355–357 is a binding site for (6S)-5,6,7,8-tetrahydrofolate; it reads SPF.

This sequence belongs to the SHMT family. In terms of assembly, homodimer. Pyridoxal 5'-phosphate serves as cofactor.

It is found in the cytoplasm. It catalyses the reaction (6R)-5,10-methylene-5,6,7,8-tetrahydrofolate + glycine + H2O = (6S)-5,6,7,8-tetrahydrofolate + L-serine. It participates in one-carbon metabolism; tetrahydrofolate interconversion. It functions in the pathway amino-acid biosynthesis; glycine biosynthesis; glycine from L-serine: step 1/1. Its function is as follows. Catalyzes the reversible interconversion of serine and glycine with tetrahydrofolate (THF) serving as the one-carbon carrier. This reaction serves as the major source of one-carbon groups required for the biosynthesis of purines, thymidylate, methionine, and other important biomolecules. Also exhibits THF-independent aldolase activity toward beta-hydroxyamino acids, producing glycine and aldehydes, via a retro-aldol mechanism. The polypeptide is Serine hydroxymethyltransferase (Streptococcus pyogenes serotype M49 (strain NZ131)).